Here is a 753-residue protein sequence, read N- to C-terminus: Probable phosphoenolpyruvate synthase (753 aa).

Histidine 398 (tele-phosphohistidine intermediate) is an active-site residue. Residues arginine 488, arginine 535, glutamate 631, glycine 653, threonine 654, asparagine 655, and aspartate 656 each contribute to the substrate site. Glutamate 631 contributes to the Mg(2+) binding site. Aspartate 656 serves as a coordination point for Mg(2+). Residue cysteine 703 is the Proton donor of the active site.

Belongs to the PEP-utilizing enzyme family. It depends on Mg(2+) as a cofactor.

It carries out the reaction pyruvate + ATP + H2O = phosphoenolpyruvate + AMP + phosphate + 2 H(+). It participates in carbohydrate biosynthesis; gluconeogenesis. Its function is as follows. Catalyzes the phosphorylation of pyruvate to phosphoenolpyruvate. The polypeptide is Probable phosphoenolpyruvate synthase (ppsA) (Archaeoglobus fulgidus (strain ATCC 49558 / DSM 4304 / JCM 9628 / NBRC 100126 / VC-16)).